The chain runs to 603 residues: Myotubularin (603 aa).

A compositionally biased stretch (polar residues) spans 1–13; the sequence is MASASTSKYNSHS. Residues 1–25 are disordered; sequence MASASTSKYNSHSLENESIKRTSRD. Residues S13 and S18 each carry the phosphoserine modification. Residues 14-25 are compositionally biased toward basic and acidic residues; that stretch reads LENESIKRTSRD. Positions 29-97 constitute a GRAM domain; that stretch reads RDLTEAVPRL…GVISRIEKMG (69 aa). The region spanning 163–538 is the Myotubularin phosphatase domain; that stretch reads GWTVYNPVEE…RHLELWVNYY (376 aa). A 1,2-diacyl-sn-glycero-3-phospho-(1D-myo-inositol-3,5-bisphosphate) contacts are provided by N288, N313, and I314. A 1,2-diacyl-sn-glycero-3-phospho-(1D-myo-inositol-3-phosphate) contacts are provided by N288, N313, and I314. C375 (phosphocysteine intermediate) is an active-site residue. A 1,2-diacyl-sn-glycero-3-phospho-(1D-myo-inositol-3,5-bisphosphate)-binding residues include S376, D377, G378, W379, D380, R381, K417, and R421. S376, D377, G378, W379, D380, and R381 together coordinate a 1,2-diacyl-sn-glycero-3-phospho-(1D-myo-inositol-3-phosphate). R421 contacts a 1,2-diacyl-sn-glycero-3-phospho-(1D-myo-inositol-3-phosphate). T495 is modified (phosphothreonine). The segment at 579–603 is disordered; that stretch reads SAKLSDPPTSPSSPSQMMPHVQTHF. S588 carries the post-translational modification Phosphoserine.

It belongs to the protein-tyrosine phosphatase family. Non-receptor class myotubularin subfamily. As to quaternary structure, heterodimer with MTMR12. Interacts with KMT2A/MLL1 (via SET domain). Interacts with DES in skeletal muscle but not in cardiac muscle. Interacts with SPEG.

The protein localises to the cytoplasm. It localises to the cell membrane. It is found in the cell projection. Its subcellular location is the filopodium. The protein resides in the ruffle. The protein localises to the late endosome. It localises to the myofibril. It is found in the sarcomere. It carries out the reaction a 1,2-diacyl-sn-glycero-3-phospho-(1D-myo-inositol-3-phosphate) + H2O = a 1,2-diacyl-sn-glycero-3-phospho-(1D-myo-inositol) + phosphate. The catalysed reaction is a 1,2-diacyl-sn-glycero-3-phospho-(1D-myo-inositol-3,5-bisphosphate) + H2O = a 1,2-diacyl-sn-glycero-3-phospho-(1D-myo-inositol-5-phosphate) + phosphate. It catalyses the reaction 1,2-dioctanoyl-sn-glycero-3-phospho-(1-D-myo-inositol-3-phosphate) + H2O = 1,2-dioctanoyl-sn-glycero-3-phospho-(1D-myo-inositol) + phosphate. The enzyme catalyses 1,2-dioctanoyl-sn-glycero-3-phospho-(1D-myo-inositol-3,5-bisphosphate) + H2O = 1,2-dioctanoyl-sn-glycero-3-phospho-(1D-myo-inositol-5-phosphate) + phosphate. It carries out the reaction 1,2-dihexadecanoyl-sn-glycero-3-phospho-(1D-myo-inositol-3,5-phosphate) + H2O = 1,2-dihexadecanoyl-sn-glycero-3-phospho-(1D-myo-inositol-5-phosphate) + phosphate. Allosterically activated by phosphatidylinositol 5-phosphate (PI5P). Functionally, lipid phosphatase which dephosphorylates phosphatidylinositol 3-monophosphate (PI3P) and phosphatidylinositol 3,5-bisphosphate (PI(3,5)P2). Has also been shown to dephosphorylate phosphotyrosine- and phosphoserine-containing peptides. Negatively regulates EGFR degradation through regulation of EGFR trafficking from the late endosome to the lysosome. Plays a role in vacuolar formation and morphology. Regulates desmin intermediate filament assembly and architecture. Plays a role in mitochondrial morphology and positioning. Required for skeletal muscle maintenance but not for myogenesis. In skeletal muscles, stabilizes MTMR12 protein levels. This is Myotubularin from Pongo abelii (Sumatran orangutan).